A 242-amino-acid chain; its full sequence is Small ribosomal subunit protein uS3 (242 aa).

A KH type-2 domain is found at 39-110 (IRKFIHKKYG…QVRINVVEVE (72 aa)). Residues 216-242 (QTMPVGANPRRRASRRPQQFEDRSNEG) form a disordered region. Residues 233-242 (QQFEDRSNEG) are compositionally biased toward basic and acidic residues.

It belongs to the universal ribosomal protein uS3 family. In terms of assembly, part of the 30S ribosomal subunit. Forms a tight complex with proteins S10 and S14.

Functionally, binds the lower part of the 30S subunit head. Binds mRNA in the 70S ribosome, positioning it for translation. In Synechococcus sp. (strain CC9902), this protein is Small ribosomal subunit protein uS3.